Reading from the N-terminus, the 592-residue chain is Arginine--tRNA ligase (592 aa).

The 'HIGH' region motif lies at 139–149; that stretch reads ANPNGPLHIGH.

It belongs to the class-I aminoacyl-tRNA synthetase family.

The protein resides in the cytoplasm. The catalysed reaction is tRNA(Arg) + L-arginine + ATP = L-arginyl-tRNA(Arg) + AMP + diphosphate. The chain is Arginine--tRNA ligase from Methanopyrus kandleri (strain AV19 / DSM 6324 / JCM 9639 / NBRC 100938).